Here is a 454-residue protein sequence, read N- to C-terminus: Aspartate aminotransferase P2, mitochondrial (454 aa).

The N-terminal 49 residues, 1-49 (SSLLSIPSLSLQYNDKLKVGGNSLRFSKEQSNTFSNAKSSCRISMVAAV), are a transit peptide targeting the mitochondrion. The L-aspartate site is built by Gly-86, Trp-182, and Asn-235. Lys-299 carries the post-translational modification N6-(pyridoxal phosphate)lysine. An L-aspartate-binding site is contributed by Arg-428.

This sequence belongs to the class-I pyridoxal-phosphate-dependent aminotransferase family. As to quaternary structure, homodimer. Pyridoxal 5'-phosphate is required as a cofactor.

The protein localises to the mitochondrion matrix. It carries out the reaction L-aspartate + 2-oxoglutarate = oxaloacetate + L-glutamate. Important for the metabolism of amino acids and Krebs-cycle related organic acids. In plants, it is involved in nitrogen metabolism and in aspects of carbon and energy metabolism. This Lupinus angustifolius (Narrow-leaved blue lupine) protein is Aspartate aminotransferase P2, mitochondrial.